Consider the following 89-residue polypeptide: Small ribosomal subunit protein uS14A (89 aa).

It belongs to the universal ribosomal protein uS14 family. Contacts proteins S3 and S10. Part of the 30S ribosomal subunit.

Its function is as follows. Binds 16S rRNA, required for the assembly of 30S particles and may also be responsible for determining the conformation of the 16S rRNA at the A site. Non-essential protein. A second form of uS14, it can integrate into the 30S subunit where it partially compensates for loss of the major uS14 protein (AC P12878) in restoring 70S formation, although it does not seem to be incorporated into the ribosome as well as the major uS14. This is Small ribosomal subunit protein uS14A from Bacillus subtilis (strain 168).